The sequence spans 138 residues: Large-conductance mechanosensitive channel (138 aa).

A run of 3 helical transmembrane segments spans residues 15-35 (VDLA…NSIV), 38-58 (IIMP…MFIQ), and 80-100 (GNFI…FLVV).

This sequence belongs to the MscL family. In terms of assembly, homopentamer.

It localises to the cell inner membrane. Channel that opens in response to stretch forces in the membrane lipid bilayer. May participate in the regulation of osmotic pressure changes within the cell. This Brucella canis (strain ATCC 23365 / NCTC 10854 / RM-666) protein is Large-conductance mechanosensitive channel.